Here is a 177-residue protein sequence, read N- to C-terminus: MDETLNVDTEQTLTCLTLTMYHPNHQDQKLFRGINFSRKEEIKADAVVAFGRDYNVCRYPLLSNRVSRIQFNLQFFKHFNCSTTAIEIKNLSKKNKLYVDNLELDYLNKIELPPKCMIRFGDFQILAVIERGDCDEKFEICCEKSHVSLVQDSFIPTMQPIPECGTLNAVEIDENEY.

The region spanning 48-104 (VAFGRDYNVCRYPLLSNRVSRIQFNLQFFKHFNCSTTAIEIKNLSKKNKLYVDNLEL) is the FHA domain.

Belongs to the TIFA family. As to quaternary structure, interacts with traf6.

The protein localises to the cytoplasm. In terms of biological role, adapter molecule that plays a key role in the activation of pro-inflammatory NF-kappa-B signaling following detection of bacterial pathogen-associated molecular pattern metabolites (PAMPs). Promotes activation of an innate immune response by inducing the oligomerization and polyubiquitination of TRAF6, which leads to the activation of TAK1 and IKK through a proteasome-independent mechanism. The polypeptide is TRAF-interacting protein with FHA domain-containing protein A (Xenopus tropicalis (Western clawed frog)).